The sequence spans 546 residues: Chaperonin GroEL (546 aa).

ATP is bound by residues 30 to 33 (TLGP), K51, 87 to 91 (DGTTT), G415, 479 to 481 (NAA), and D495.

Belongs to the chaperonin (HSP60) family. Forms a cylinder of 14 subunits composed of two heptameric rings stacked back-to-back. Interacts with the co-chaperonin GroES.

The protein resides in the cytoplasm. It catalyses the reaction ATP + H2O + a folded polypeptide = ADP + phosphate + an unfolded polypeptide.. Together with its co-chaperonin GroES, plays an essential role in assisting protein folding. The GroEL-GroES system forms a nano-cage that allows encapsulation of the non-native substrate proteins and provides a physical environment optimized to promote and accelerate protein folding. This is Chaperonin GroEL from Pseudomonas putida (strain ATCC 700007 / DSM 6899 / JCM 31910 / BCRC 17059 / LMG 24140 / F1).